The sequence spans 425 residues: MDRSIMPIDSPARDKPPDELVWPLRLFLILLGYSTVATPAAILIYYVRRNRHAFETPYLSIRLLLRSFAVGNPEYQLIPTGEKQARKENDSIPQTRAQCINVIILLLFFFSGIQVTLVAMGVLQERIITRGYRRSDQLEVEDKFGETQFLIFCNRIVALVLSLMILAKDWTKQPPHVPPLYVHSYTSFSNTISSWCQYEALKYVSFPTQTICKASKVVVTMLMGRLVRGQRYSWFEYGCGCTIAFGASLFLLSSSSKGAGSTITYTSFSGMILMAGYLLFDAFTLNWQKALFDTKPKVSKYQMMFGVNFFSAILCAVSLIEQGTLWSSIKFGAEHVDFSRDVFLLSLSGAIGQIFIYSTIERFGPIVFAVIMTIRQMLSIVLSTIMYGHELTFLAAIGFMIVFAAIFVDIHKKYSDKSRGPQRSW.

9 consecutive transmembrane segments (helical) span residues 27-47 (FLIL…IYYV), 102-122 (VIIL…AMGV), 147-167 (TQFL…MILA), 232-252 (YSWF…LFLL), 263-283 (ITYT…FDAF), 303-323 (MMFG…IEQG), 342-360 (VFLL…YSTI), 365-387 (PIVF…TIMY), and 391-411 (LTFL…VDIH).

The protein belongs to the nucleotide-sugar transporter family. SLC35B subfamily.

It is found in the golgi apparatus membrane. Functionally, mediates the transport of adenosine 3'-phospho 5'-phosphosulfate (PAPS), from cytosol into Golgi. PAPS is a universal sulfuryl donor for sulfation events that take place in the Golgi. This Caenorhabditis elegans protein is Adenosine 3'-phospho 5'-phosphosulfate transporter 1 (pst-1).